The chain runs to 405 residues: Acetate kinase (405 aa).

Asn-7 serves as a coordination point for Mg(2+). Lys-14 provides a ligand contact to ATP. Arg-90 contacts substrate. The active-site Proton donor/acceptor is Asp-147. Residues 207–211 (HLGNG), 282–284 (DFR), and 331–335 (GVGEN) each bind ATP. Glu-384 contacts Mg(2+).

Belongs to the acetokinase family. Homodimer. Mg(2+) is required as a cofactor. The cofactor is Mn(2+).

Its subcellular location is the cytoplasm. It catalyses the reaction acetate + ATP = acetyl phosphate + ADP. It participates in metabolic intermediate biosynthesis; acetyl-CoA biosynthesis; acetyl-CoA from acetate: step 1/2. Catalyzes the formation of acetyl phosphate from acetate and ATP. Can also catalyze the reverse reaction. The polypeptide is Acetate kinase (Clostridium kluyveri (strain ATCC 8527 / DSM 555 / NBRC 12016 / NCIMB 10680 / K1)).